The sequence spans 729 residues: U-box domain-containing protein 17 (729 aa).

Residues 304-378 (TVPKDFVCPI…VQWCTASGIS (75 aa)) enclose the U-box domain. ARM repeat units lie at residues 438 to 477 (KENRAYIAEAGAIPHLCRLLTSENAIAQENSVTAMLNLSI), 479 to 520 (EKNK…SLSA), 523 to 562 (EYKKRIAIVDQCVEALALLLQNGTPRGKKDAVTALYNLST), and 564 to 601 (PDNCSRMIEGGGVSSLVGALKNEGVAEEAAGALALLVR).

The catalysed reaction is S-ubiquitinyl-[E2 ubiquitin-conjugating enzyme]-L-cysteine + [acceptor protein]-L-lysine = [E2 ubiquitin-conjugating enzyme]-L-cysteine + N(6)-ubiquitinyl-[acceptor protein]-L-lysine.. It participates in protein modification; protein ubiquitination. In terms of biological role, functions as an E3 ubiquitin ligase. The sequence is that of U-box domain-containing protein 17 (PUB17) from Arabidopsis thaliana (Mouse-ear cress).